The primary structure comprises 416 residues: Inositol polyphosphate multikinase (416 aa).

The segment at methionine 1 to glycine 38 is disordered. Position 2 is an N-acetylalanine (alanine 2). Residue serine 7 is modified to Phosphoserine. Lysine 75 is a binding site for ATP. Residue arginine 82 coordinates substrate. ATP contacts are provided by residues glutamate 131–valine 133 and aspartate 144. Substrate contacts are provided by residues lysine 146, lysine 160 to lysine 167, and glutamine 196. The Nuclear localization signal signature appears at arginine 320–histidine 330. Aspartate 385 contributes to the ATP binding site. Histidine 388 lines the substrate pocket.

It belongs to the inositol phosphokinase (IPK) family. It depends on Mg(2+) as a cofactor. As to expression, ubiquitous, with the highest expression in skeletal muscle, liver, placenta, lung, peripheral blood leukocytes, kidney, spleen and colon.

It localises to the nucleus. It carries out the reaction 1D-myo-inositol 1,4,5-trisphosphate + 2 ATP = 1D-myo-inositol 1,3,4,5,6-pentakisphosphate + 2 ADP + 2 H(+). The enzyme catalyses 1D-myo-inositol 1,3,4,6-tetrakisphosphate + ATP = 1D-myo-inositol 1,3,4,5,6-pentakisphosphate + ADP + H(+). The catalysed reaction is 1-octadecanoyl-2-(5Z,8Z,11Z,14Z)-eicosatetraenoyl-sn-glycero-3-phospho-1D-myo-inositol 4,5-bisphosphate + ATP = 1-octadecanoyl-2-(5Z,8Z,11Z,14Z-eicosatetraenoyl)-sn-glycero-3-phospho-(1D-myo-inositol 3,4,5-triphosphate) + ADP + H(+). It catalyses the reaction a 1,2-diacyl-sn-glycero-3-phospho-(1D-myo-inositol-4,5-bisphosphate) + ATP = a 1,2-diacyl-sn-glycero-3-phospho-(1D-myo-inositol-3,4,5-trisphosphate) + ADP + H(+). It carries out the reaction 1D-myo-inositol 1,4,5,6-tetrakisphosphate + ATP = 1D-myo-inositol 1,3,4,5,6-pentakisphosphate + ADP + H(+). The protein operates within phospholipid metabolism; phosphatidylinositol metabolism. With respect to regulation, inhibited by flavonoids that occupy the ATP-binding pocket. Inhibited by myricetin, quercetin, luteolin, kaempferol, isorhamnetin and diosmetin, and to a lesser degree by rhamnetin and apigenin. Functionally, inositol phosphate kinase with a broad substrate specificity. Phosphorylates inositol 1,4,5-trisphosphate (Ins(1,4,5)P3) first to inositol 1,3,4,5-tetrakisphosphate and then to inositol 1,3,4,5,6-pentakisphosphate (Ins(1,3,4,5,6)P5). Phosphorylates inositol 1,3,4,6-tetrakisphosphate (Ins(1,3,4,6)P4). Phosphorylates inositol 1,4,5,6-tetrakisphosphate (Ins(1,4,5,6)P4). Phosphorylates glycero-3-phospho-1D-myo-inositol 4,5-bisphosphate to glycero-3-phospho-1D-myo-inositol 3,4,5-trisphosphate. Plays an important role in MLKL-mediated necroptosis via its role in the biosynthesis of inositol pentakisphosphate (InsP5) and inositol hexakisphosphate (InsP6). Binding of these highly phosphorylated inositol phosphates to MLKL mediates the release of an N-terminal auto-inhibitory region, leading to activation of the kinase. Essential for activated phospho-MLKL to oligomerize and localize to the cell membrane during necroptosis. Required for normal embryonic development, probably via its role in the biosynthesis of inositol 1,3,4,5,6-pentakisphosphate (Ins(1,3,4,5,6)P5) and inositol hexakisphosphate (InsP6). In Homo sapiens (Human), this protein is Inositol polyphosphate multikinase (IPMK).